Consider the following 471-residue polypeptide: MLLPRHHDPIVAIATAPGRGAVGIVRVSGRGLGALIEAVCGRALQPRHAHYGPFLDAQGEAIDQGLALHFPAPHSYTGEEVLELQAHGGPVLLQLLLARCLEAAAQPDARSGLPRLRGLRVAEPGEFTERAFLNDKLDLAQAEAVADLIDASTEAAARSAGRALAGAFSQQVDTLRDRLIELRMLVEATLDFPEEEIDFLEKADARGRLARIAEALDAVLARAKQGALLREGLRVVLAGQPNVGKSSLLNALAGAELAIVTPIAGTTRDKVAETIQIEGVPLHVVDTAGLRAEDDARDEVERIGMQRSWGAIGEADAVIFLHDLTRAGDPGYDAAERDIEQRLPAGVHVLDVHNKADAAAAGAAALAPQALRLSARTGEGLDTLRRRLLQLAGWQAGSEGVFIARTRHLQALQATAEHLVRARQLADRADAALDLLAEELRLAHDALGAITGRYTPDELLGDIFSRFCIGK.

Positions 26, 83, and 136 each coordinate (6S)-5-formyl-5,6,7,8-tetrahydrofolate. The 162-residue stretch at 232–393 folds into the TrmE-type G domain; sequence GLRVVLAGQP…LRRRLLQLAG (162 aa). Asn242 contributes to the K(+) binding site. GTP is bound by residues 242 to 247, 261 to 267, 286 to 289, 354 to 357, and 374 to 376; these read NVGKSS, TPIAGTT, DTAG, NKAD, and SAR. Residue Ser246 coordinates Mg(2+). K(+) contacts are provided by Thr261, Ile263, and Thr266. Thr267 is a binding site for Mg(2+). A (6S)-5-formyl-5,6,7,8-tetrahydrofolate-binding site is contributed by Lys471.

It belongs to the TRAFAC class TrmE-Era-EngA-EngB-Septin-like GTPase superfamily. TrmE GTPase family. As to quaternary structure, homodimer. Heterotetramer of two MnmE and two MnmG subunits. The cofactor is K(+).

It localises to the cytoplasm. Its function is as follows. Exhibits a very high intrinsic GTPase hydrolysis rate. Involved in the addition of a carboxymethylaminomethyl (cmnm) group at the wobble position (U34) of certain tRNAs, forming tRNA-cmnm(5)s(2)U34. In Methylibium petroleiphilum (strain ATCC BAA-1232 / LMG 22953 / PM1), this protein is tRNA modification GTPase MnmE.